The chain runs to 732 residues: MSTESKCPFAGGAYANTEAGAKGNRDWWPKQLNLDILHQHSSLSNPLEENFDYASEFQSLDLDAVVKDLHALMTTSQDWWPADFGHYGGLFIRMAWHSAGTYRIYDGRGGASRGAQRFAPLNSWPDNVNLDKARRLLWPIKQKYGRKISWADLMILAGNVALESMGFKTFGFGGGREDIWEPEKDINWGPETTWLGDERYSGNRELANPLGAVQMGLIYVNPEGPNGNPDPLASARDIRETFARMAMNDEETVALIAGGHTFGKTHGAAPASHVGLEPEGASIEEQGLGWKNSFGTGVGKDAITSGLEVIWTPTPTQWDMSYLETLYGYEWELTKSPAGAHQWKPKGDAGAGTVPDAFDAKKRHQPSMLTSDIALRTDPAYDKICRDFMAHPDKYADAFARAWYKLTHRDMGPITRYLGPLVPKEELIWQDPVPAVDHELVNDADVEALKAEVLASGLTIPQLVSTAWAAASSFRGSDRRGGANGARIRLEPQKNWEANQPAELAKVLAKLEGIQQKFNGAQQGGKKISLADLIVLAGNAGVEAAAKKAGHDVKVPFAPGRTDATQEQTDAPTFAPLEPKADGFRNYAKKGLEDAAAYLLIDKAQLLTLTAPEMTVLVGGLRALGANYGQSKHGVFTSRPETLTNDFFVNLLDMNTAWAKSEKAAGEFEGRDRKTGQIKWTASIVDLVFGSNSQLRALAEVYATSDSTEAFVKDFVAAWTKVMNLDRFDLKK.

Positions 1–15 (MSTESKCPFAGGAYA) are cleaved as a signal peptide. The segment at residues 96–219 (WHSAGTYRIY…LGAVQMGLIY (124 aa)) is a cross-link (tryptophyl-tyrosyl-methioninium (Trp-Tyr) (with M-245)). The Proton acceptor role is filled by histidine 97. Residues 219-245 (YVNPEGPNGNPDPLASARDIRETFARM) constitute a cross-link (tryptophyl-tyrosyl-methioninium (Tyr-Met) (with W-96)). Heme b is bound at residue histidine 260.

Belongs to the peroxidase family. Peroxidase/catalase subfamily. In terms of assembly, homodimer or homotetramer. Heme b is required as a cofactor. In terms of processing, formation of the three residue Trp-Tyr-Met cross-link is important for the catalase, but not the peroxidase activity of the enzyme.

It carries out the reaction H2O2 + AH2 = A + 2 H2O. The catalysed reaction is 2 H2O2 = O2 + 2 H2O. Its function is as follows. Bifunctional enzyme with both catalase and broad-spectrum peroxidase activity. The polypeptide is Catalase-peroxidase (Acidobacterium capsulatum (strain ATCC 51196 / DSM 11244 / BCRC 80197 / JCM 7670 / NBRC 15755 / NCIMB 13165 / 161)).